The primary structure comprises 490 residues: ATP synthase subunit beta, plastid (490 aa).

170 to 177 lines the ATP pocket; sequence GGAGVGKT.

Belongs to the ATPase alpha/beta chains family. As to quaternary structure, F-type ATPases have 2 components, CF(1) - the catalytic core - and CF(0) - the membrane proton channel. CF(1) has five subunits: alpha(3), beta(3), gamma(1), delta(1), epsilon(1). CF(0) has four main subunits: a(1), b(1), b'(1) and c(9-12).

It localises to the plastid thylakoid membrane. The enzyme catalyses ATP + H2O + 4 H(+)(in) = ADP + phosphate + 5 H(+)(out). In terms of biological role, produces ATP from ADP in the presence of a proton gradient across the membrane. The catalytic sites are hosted primarily by the beta subunits. This is ATP synthase subunit beta, plastid from Cuscuta reflexa (Southern Asian dodder).